The chain runs to 154 residues: SsrA-binding protein (154 aa).

The disordered stretch occupies residues 131–154 (DKRQDLKQKEAKRDIERAFKERQQ). The span at 132–154 (KRQDLKQKEAKRDIERAFKERQQ) shows a compositional bias: basic and acidic residues.

The protein belongs to the SmpB family.

The protein resides in the cytoplasm. Functionally, required for rescue of stalled ribosomes mediated by trans-translation. Binds to transfer-messenger RNA (tmRNA), required for stable association of tmRNA with ribosomes. tmRNA and SmpB together mimic tRNA shape, replacing the anticodon stem-loop with SmpB. tmRNA is encoded by the ssrA gene; the 2 termini fold to resemble tRNA(Ala) and it encodes a 'tag peptide', a short internal open reading frame. During trans-translation Ala-aminoacylated tmRNA acts like a tRNA, entering the A-site of stalled ribosomes, displacing the stalled mRNA. The ribosome then switches to translate the ORF on the tmRNA; the nascent peptide is terminated with the 'tag peptide' encoded by the tmRNA and targeted for degradation. The ribosome is freed to recommence translation, which seems to be the essential function of trans-translation. This is SsrA-binding protein from Listeria innocua serovar 6a (strain ATCC BAA-680 / CLIP 11262).